Here is a 918-residue protein sequence, read N- to C-terminus: Isoleucine--tRNA ligase 1 (918 aa).

Residues 57–67 carry the 'HIGH' region motif; sequence PYANGDIHIGH. Position 553 (E553) interacts with L-isoleucyl-5'-AMP. The short motif at 594 to 598 is the 'KMSKS' region element; that stretch reads KMSKS. K597 is an ATP binding site. Zn(2+)-binding residues include C885, C888, C905, and C908.

It belongs to the class-I aminoacyl-tRNA synthetase family. IleS type 1 subfamily. In terms of assembly, monomer. It depends on Zn(2+) as a cofactor.

Its subcellular location is the cytoplasm. It carries out the reaction tRNA(Ile) + L-isoleucine + ATP = L-isoleucyl-tRNA(Ile) + AMP + diphosphate. Functionally, catalyzes the attachment of isoleucine to tRNA(Ile). As IleRS can inadvertently accommodate and process structurally similar amino acids such as valine, to avoid such errors it has two additional distinct tRNA(Ile)-dependent editing activities. One activity is designated as 'pretransfer' editing and involves the hydrolysis of activated Val-AMP. The other activity is designated 'posttransfer' editing and involves deacylation of mischarged Val-tRNA(Ile). This is Isoleucine--tRNA ligase 1 from Oceanobacillus iheyensis (strain DSM 14371 / CIP 107618 / JCM 11309 / KCTC 3954 / HTE831).